A 1116-amino-acid chain; its full sequence is Protein translocase subunit SecA (1116 aa).

Residues Q176, 194-198 (GEGKT), and D693 each bind ATP.

This sequence belongs to the SecA family. In terms of assembly, monomer and homodimer. Part of the essential Sec protein translocation apparatus which comprises SecA, SecYEG and auxiliary proteins SecDF. Other proteins may also be involved.

Its subcellular location is the cell inner membrane. It localises to the cytoplasm. The enzyme catalyses ATP + H2O + cellular proteinSide 1 = ADP + phosphate + cellular proteinSide 2.. In terms of biological role, part of the Sec protein translocase complex. Interacts with the SecYEG preprotein conducting channel. Has a central role in coupling the hydrolysis of ATP to the transfer of proteins into and across the cell membrane, serving as an ATP-driven molecular motor driving the stepwise translocation of polypeptide chains across the membrane. The protein is Protein translocase subunit SecA of Amoebophilus asiaticus (strain 5a2).